The following is a 428-amino-acid chain: Enolase (428 aa).

Gln164 lines the (2R)-2-phosphoglycerate pocket. Catalysis depends on Glu206, which acts as the Proton donor. Residues Asp243, Glu286, and Asp313 each contribute to the Mg(2+) site. Lys338, Arg367, Ser368, and Lys389 together coordinate (2R)-2-phosphoglycerate. Lys338 functions as the Proton acceptor in the catalytic mechanism.

This sequence belongs to the enolase family. Requires Mg(2+) as cofactor.

The protein resides in the cytoplasm. The protein localises to the secreted. It is found in the cell surface. It carries out the reaction (2R)-2-phosphoglycerate = phosphoenolpyruvate + H2O. It functions in the pathway carbohydrate degradation; glycolysis; pyruvate from D-glyceraldehyde 3-phosphate: step 4/5. Functionally, catalyzes the reversible conversion of 2-phosphoglycerate (2-PG) into phosphoenolpyruvate (PEP). It is essential for the degradation of carbohydrates via glycolysis. In Dehalococcoides mccartyi (strain ATCC BAA-2100 / JCM 16839 / KCTC 5957 / BAV1), this protein is Enolase.